The primary structure comprises 243 residues: 1-(5-phosphoribosyl)-5-[(5-phosphoribosylamino)methylideneamino] imidazole-4-carboxamide isomerase (243 aa).

The active-site Proton acceptor is D8. Residue D129 is the Proton donor of the active site.

It belongs to the HisA/HisF family.

It is found in the cytoplasm. It catalyses the reaction 1-(5-phospho-beta-D-ribosyl)-5-[(5-phospho-beta-D-ribosylamino)methylideneamino]imidazole-4-carboxamide = 5-[(5-phospho-1-deoxy-D-ribulos-1-ylimino)methylamino]-1-(5-phospho-beta-D-ribosyl)imidazole-4-carboxamide. It functions in the pathway amino-acid biosynthesis; L-histidine biosynthesis; L-histidine from 5-phospho-alpha-D-ribose 1-diphosphate: step 4/9. The polypeptide is 1-(5-phosphoribosyl)-5-[(5-phosphoribosylamino)methylideneamino] imidazole-4-carboxamide isomerase (Azorhizobium caulinodans (strain ATCC 43989 / DSM 5975 / JCM 20966 / LMG 6465 / NBRC 14845 / NCIMB 13405 / ORS 571)).